Here is a 98-residue protein sequence, read N- to C-terminus: NADH-ubiquinone oxidoreductase chain 4L (98 aa).

The next 3 membrane-spanning stretches (helical) occupy residues 1–21 (MTPTYMNIMLAFTISLLGMLT), 27–47 (VASLLCLEGMMMSLFIMATLI), and 61–81 (IILLVFAACETAVGLALLISI).

It belongs to the complex I subunit 4L family. In terms of assembly, core subunit of respiratory chain NADH dehydrogenase (Complex I) which is composed of 45 different subunits.

It localises to the mitochondrion inner membrane. The catalysed reaction is a ubiquinone + NADH + 5 H(+)(in) = a ubiquinol + NAD(+) + 4 H(+)(out). Its function is as follows. Core subunit of the mitochondrial membrane respiratory chain NADH dehydrogenase (Complex I) which catalyzes electron transfer from NADH through the respiratory chain, using ubiquinone as an electron acceptor. Part of the enzyme membrane arm which is embedded in the lipid bilayer and involved in proton translocation. The protein is NADH-ubiquinone oxidoreductase chain 4L (MT-ND4L) of Macaca fascicularis (Crab-eating macaque).